The primary structure comprises 97 residues: uncharacterized protein (97 aa).

The next 3 membrane-spanning stretches (helical) occupy residues 5-25, 49-71, and 75-92; these read INYL…FVGI, IAGY…SFQG, and LIPP…IYVN.

It is found in the cell membrane. This is an uncharacterized protein from Bacillus subtilis (strain 168).